The sequence spans 505 residues: ATP synthase subunit beta (505 aa).

157-164 (GGAGVGKT) is a binding site for ATP.

The protein belongs to the ATPase alpha/beta chains family. As to quaternary structure, F-type ATPases have 2 components, CF(1) - the catalytic core - and CF(0) - the membrane proton channel. CF(1) has five subunits: alpha(3), beta(3), gamma(1), delta(1), epsilon(1). CF(0) has three main subunits: a(1), b(2) and c(9-12). The alpha and beta chains form an alternating ring which encloses part of the gamma chain. CF(1) is attached to CF(0) by a central stalk formed by the gamma and epsilon chains, while a peripheral stalk is formed by the delta and b chains.

It is found in the cell inner membrane. It carries out the reaction ATP + H2O + 4 H(+)(in) = ADP + phosphate + 5 H(+)(out). Functionally, produces ATP from ADP in the presence of a proton gradient across the membrane. The catalytic sites are hosted primarily by the beta subunits. The sequence is that of ATP synthase subunit beta from Bacteroides thetaiotaomicron (strain ATCC 29148 / DSM 2079 / JCM 5827 / CCUG 10774 / NCTC 10582 / VPI-5482 / E50).